A 91-amino-acid polypeptide reads, in one-letter code: Large ribosomal subunit protein bL27 (91 aa).

Residues 1–20 (MAHKKGVGSSKNGRDSNPKY) are disordered.

The protein belongs to the bacterial ribosomal protein bL27 family.

The chain is Large ribosomal subunit protein bL27 from Deinococcus geothermalis (strain DSM 11300 / CIP 105573 / AG-3a).